The following is a 160-amino-acid chain: H/ACA ribonucleoprotein complex subunit 2 (160 aa).

At Ser-15 the chain carries Phosphoserine. Thr-23 bears the Phosphothreonine mark.

Belongs to the eukaryotic ribosomal protein eL8 family. Component of the box H/ACA small nucleolar ribonucleoprotein (H/ACA snoRNP) complex consisting of Nop60B, Gar1, NPH2 and Nop10, and associated with H/ACA-type snoRNAs.

The protein localises to the nucleus. It is found in the nucleolus. In terms of biological role, component of the box H/ACA small nucleolar ribonucleoprotein (H/ACA snoRNP) complex, which catalyzes pseudouridylation of rRNA. This involves the isomerization of uridine such that the ribose is subsequently attached to C5, instead of the normal N1. Pseudouridine ('psi') residues may serve to stabilize the conformation of rRNAs. Required for ribosome biogenesis. H/ACA snoRNP complex-dependent ribosome biogenesis is important in female germline cell differentiation during oogenesis. This Drosophila melanogaster (Fruit fly) protein is H/ACA ribonucleoprotein complex subunit 2.